The following is a 386-amino-acid chain: All-trans-retinol dehydrogenase [NAD(+)] ADH7 (386 aa).

C59 is a binding site for Zn(2+). An NAD(+)-binding site is contributed by 60 to 64 (RTDDH). Zn(2+)-binding residues include H80, C110, C113, C116, C124, and C186. NAD(+)-binding positions include 211-216 (GLGGVG), D235, K240, 281-283 (IGH), 304-306 (VGV), 329-331 (CVF), and R381.

Belongs to the zinc-containing alcohol dehydrogenase family. Class-IV subfamily. In terms of assembly, homodimer. The cofactor is Zn(2+). As to expression, preferentially expressed in stomach.

Its subcellular location is the cytoplasm. The enzyme catalyses a primary alcohol + NAD(+) = an aldehyde + NADH + H(+). It carries out the reaction 10-hydroxydecanoate + NAD(+) = 10-oxodecanoate + NADH + H(+). It catalyses the reaction all-trans-retinol + NAD(+) = all-trans-retinal + NADH + H(+). The catalysed reaction is 9-cis-retinol + NAD(+) = 9-cis-retinal + NADH + H(+). The enzyme catalyses all-trans-3,4-didehydroretinol + NAD(+) = all-trans-3,4-didehydroretinal + NADH + H(+). It carries out the reaction all-trans-4-hydroxyretinol + NAD(+) = all-trans-4-hydroxyretinal + NADH + H(+). It catalyses the reaction all-trans-4-oxoretinol + NAD(+) = all-trans-4-oxoretinal + NADH + H(+). The catalysed reaction is 12-hydroxydodecanoate + NAD(+) = 12-oxododecanoate + NADH + H(+). The enzyme catalyses 16-hydroxyhexadecanoate + NAD(+) = 16-oxohexadecanoate + NADH + H(+). It carries out the reaction hexan-1-ol + NAD(+) = hexanal + NADH + H(+). It catalyses the reaction (E)-hex-2-en-1-ol + NAD(+) = (E)-hex-2-enal + NADH + H(+). The catalysed reaction is (E)-4-hydroxynon-2-en-1-ol + NAD(+) = (E)-4-hydroxynon-2-enal + NADH + H(+). Retinol oxidation is inhibited by the detergent Tween 80. Ethanol inhibits both all-trans-retinol and 9-cis-retinol oxidation. 13-cis-retinol is an effective competitive inhibitor of the 9-cis-retinol oxidation. All-trans-retinoic acid is a powerful inhibitor of all-trans-retinol oxidation. 13-cis-retinoic acid is a powerful inhibitor of all-trans-retinol oxidation. Cimetidine competitively inhibited ethanol oxidation. Its function is as follows. Catalyzes the NAD-dependent oxidation of all-trans-retinol, alcohol, and omega-hydroxy fatty acids and their derivatives. Oxidizes preferentially all trans-retinol, all-trans-4-hydroxyretinol, 9-cis-retinol, 2-hexenol, and long chain omega-hydroxy fatty acids such as juniperic acid. In vitro can also catalyze the NADH-dependent reduction of all-trans-retinal and aldehydes and their derivatives. Reduces preferentially all trans-retinal, all-trans-4-oxoretinal and hexanal. Catalyzes in the oxidative direction with higher efficiency. Therefore may participate in retinoid metabolism, fatty acid omega-oxidation, and elimination of cytotoxic aldehydes produced by lipid peroxidation. The chain is All-trans-retinol dehydrogenase [NAD(+)] ADH7 from Homo sapiens (Human).